The primary structure comprises 1962 residues: Myosin heavy chain, muscle (1962 aa).

The Myosin N-terminal SH3-like domain maps to Asp-33 to Pro-82. The Myosin motor domain maps to Glu-86–Asp-777. Gly-179–Thr-186 lines the ATP pocket. The actin-binding stretch occupies residues Leu-656–Glu-678. The 30-residue stretch at Leu-780–Ala-809 folds into the IQ domain. The stretch at Lys-802–Ser-1927 forms a coiled coil. Disordered regions lie at residues Glu-1822–Arg-1862 and Lys-1922–Phe-1962.

It belongs to the TRAFAC class myosin-kinesin ATPase superfamily. Myosin family. As to quaternary structure, muscle myosin is a hexameric protein that consists of 2 heavy chain subunits (MHC), 2 alkali light chain subunits (MLC) and 2 regulatory light chain subunits (MLC-2). In terms of tissue distribution, expressed in larval and adult muscles. Isoforms containing exon 9a are expressed in indirect flight muscles, exons 9a and 9b are expressed in jump muscles, exons 9b and 9c are expressed in other larval and adult muscles.

It localises to the cytoplasm. Its subcellular location is the myofibril. Functionally, muscle contraction. This chain is Myosin heavy chain, muscle (Mhc), found in Drosophila melanogaster (Fruit fly).